The primary structure comprises 362 residues: Ferrochelatase (362 aa).

Residues His-212 and Glu-294 each coordinate Fe cation.

It belongs to the ferrochelatase family.

The protein localises to the cytoplasm. The enzyme catalyses heme b + 2 H(+) = protoporphyrin IX + Fe(2+). It participates in porphyrin-containing compound metabolism; protoheme biosynthesis; protoheme from protoporphyrin-IX: step 1/1. Its function is as follows. Catalyzes the ferrous insertion into protoporphyrin IX. This Leptospira biflexa serovar Patoc (strain Patoc 1 / Ames) protein is Ferrochelatase.